The sequence spans 504 residues: ATP synthase subunit alpha (504 aa).

169–176 (GDRKTGKT) provides a ligand contact to ATP.

The protein belongs to the ATPase alpha/beta chains family. In terms of assembly, F-type ATPases have 2 components, CF(1) - the catalytic core - and CF(0) - the membrane proton channel. CF(1) has five subunits: alpha(3), beta(3), gamma(1), delta(1), epsilon(1). CF(0) has three main subunits: a(1), b(2) and c(9-12). The alpha and beta chains form an alternating ring which encloses part of the gamma chain. CF(1) is attached to CF(0) by a central stalk formed by the gamma and epsilon chains, while a peripheral stalk is formed by the delta and b chains.

It localises to the cell membrane. The catalysed reaction is ATP + H2O + 4 H(+)(in) = ADP + phosphate + 5 H(+)(out). Produces ATP from ADP in the presence of a proton gradient across the membrane. The alpha chain is a regulatory subunit. This chain is ATP synthase subunit alpha, found in Leuconostoc citreum (strain KM20).